The sequence spans 513 residues: MSDKLIIFDTTLRDGEQSPGASMTREEKIRIARQLERLKVDVIEAGFAASSNGDFEAIRSIAQVVKDSTICSLARANDKDIARAAEALKPANSFRIHTFIATSALHMEKKLRMTPDEVYQQARLAVRFARQFTDDIEFSPEDGSRSDMDFLCRVLEGVIAEGATTINLPDTVGYAVPEGYAELIRSVRERIPNSDKAIWSVHCHNDLGMAVANSLAAVKMAGARQIECTINGLGERAGNTSLEEVVMAVKTRRDYFDLDIGVDTTQIVPASKLVSQITGFVVQPNKAVVGANAFAHASGIHQDGVLKARDTYEIMRAEDVGWSANKIVLGKLSGRNAFKQRLQELGIELESETEVNAAFTRFKELADQKAEIFDEDIVAIVSNEAQHDANEHFRFISLSQRSETGERPHARVVFSMDGQEQSGEGEGNGPVDATLHAIESRVSSGAEMVLYSVNAITGGTEAQGEVTVRLSKAGRIVNGVGTDPDIVAASAKAYLAALNKLHDKAVQKINPQI.

Residues 5-268 (LIIFDTTLRD…DIGVDTTQIV (264 aa)) enclose the Pyruvate carboxyltransferase domain. 4 residues coordinate Mn(2+): D14, H202, H204, and N239. Residues 394-513 (RFISLSQRSE…KAVQKINPQI (120 aa)) form a regulatory domain region.

It belongs to the alpha-IPM synthase/homocitrate synthase family. LeuA type 1 subfamily. Homodimer. Mn(2+) serves as cofactor.

It is found in the cytoplasm. The enzyme catalyses 3-methyl-2-oxobutanoate + acetyl-CoA + H2O = (2S)-2-isopropylmalate + CoA + H(+). Its pathway is amino-acid biosynthesis; L-leucine biosynthesis; L-leucine from 3-methyl-2-oxobutanoate: step 1/4. Its function is as follows. Catalyzes the condensation of the acetyl group of acetyl-CoA with 3-methyl-2-oxobutanoate (2-ketoisovalerate) to form 3-carboxy-3-hydroxy-4-methylpentanoate (2-isopropylmalate). The sequence is that of 2-isopropylmalate synthase from Cupriavidus necator (strain ATCC 17699 / DSM 428 / KCTC 22496 / NCIMB 10442 / H16 / Stanier 337) (Ralstonia eutropha).